The sequence spans 3114 residues: Centromere protein F (3114 aa).

The tract at residues 1–481 (MSWALEEWKE…IKENELRRSM (481 aa)) is interaction with SNAP25 and required for localization to the cytoplasm. The stretch at 13–131 (PTRALQKIQE…KSELERSQQA (119 aa)) forms a coiled coil. The residue at position 106 (S106) is a Phosphoserine. Phosphothreonine is present on residues T144, T151, and T154. Phosphotyrosine is present on Y158. Positions 211–235 (QASSSVFSWQQEKTPSHLSSNSQRT) are enriched in polar residues. Residues 211–236 (QASSSVFSWQQEKTPSHLSSNSQRTP) form a disordered region. 2 positions are modified to phosphoserine: S242 and S276. Residues 280–685 (LDQLKAQNQE…SVEIRNLHNV (406 aa)) adopt a coiled-coil conformation. Phosphoserine occurs at positions 773, 783, 821, 834, 838, and 876. 2 coiled-coil regions span residues 899 to 989 (VAET…LNQE) and 1196 to 1244 (LEVK…IRGD). Phosphoserine is present on residues S1248, S1255, and S1259. The stretch at 1549–1646 (VEELESLCEV…ELEVARLQLQ (98 aa)) forms a coiled coil. Phosphoserine is present on residues S1651, S1652, and S1654. Disordered stretches follow at residues 1667–1690 (RNES…KHDV) and 1710–1746 (TETG…SECI). Residues 1669–1690 (ESCDISKEHTSETTERTPKHDV) are compositionally biased toward basic and acidic residues. The residue at position 1726 (S1726) is a Phosphoserine. Phosphothreonine is present on T1862. 2 positions are modified to phosphoserine: S1868 and S1892. 2 coiled-coil regions span residues 1890-2078 (NDSW…LQAR) and 2107-2891 (LSST…LCSQ). The segment at 2026-2351 (LLKDKTHLQE…ERELEIARTN (326 aa)) is interaction with NDE1 and NDEL1. 2 repeat units span residues 2111–2290 (QEEV…QSLD) and 2293–2472 (IEEE…QNLS). The tract at residues 2111 to 2472 (QEEVHQLRRG…ACKAKEQNLS (362 aa)) is 2 X 177 AA tandem repeats. The sufficient for self-association stretch occupies residues 2392–2829 (SEKENLTNEL…QAAQEKQKTG (438 aa)). Residues 2392–3017 (SEKENLTNEL…ATRTSPRLAA (626 aa)) form a sufficient for centromere localization region. S2416 and S2417 each carry phosphoserine. K2779 carries the N6-acetyllysine modification. The tract at residues 2831-3017 (VMDTKVDELT…ATRTSPRLAA (187 aa)) is sufficient for nuclear localization. Positions 2891–2977 (QQSKQDSRGS…AEDTEGTEFE (87 aa)) are disordered. A phosphoserine mark is found at S2900, S2911, S2922, and S2936. A Nuclear localization signal motif is present at residues 2919–2936 (KRLSSGQNKASGKRQRSS). T2949 is modified (phosphothreonine). Phosphoserine is present on residues S2952, S2998, S3023, and S3026. The tract at residues 3024–3114 (PLSLGKENLA…SNGSENCKVQ (91 aa)) is disordered. Residues 3033–3045 (AESSKPTAGGSRS) are compositionally biased toward polar residues. 3 positions are modified to phosphoserine: S3054, S3079, and S3083. A compositionally biased stretch (basic and acidic residues) spans 3079-3089 (SPTDSPREGLR). The span at 3105 to 3114 (SNGSENCKVQ) shows a compositional bias: polar residues. C3111 bears the Cysteine methyl ester mark. Residue C3111 is the site of S-farnesyl cysteine attachment. The propeptide at 3112–3114 (KVQ) is removed in mature form.

The protein belongs to the centromere protein F family. As to quaternary structure, interacts with and STX4 (via C-terminus). Interacts (via N-terminus) with RBL1, RBL2 and SNAP25. Self-associates. Interacts with CENP-E and BUBR1 (via C-terminus). Interacts (via C-terminus) with NDE1, NDEL1 and RB1. Post-translationally, hyperphosphorylated during mitosis.

The protein localises to the cytoplasm. It is found in the perinuclear region. It localises to the nucleus matrix. The protein resides in the chromosome. Its subcellular location is the centromere. The protein localises to the kinetochore. It is found in the cytoskeleton. It localises to the spindle. In terms of biological role, required for kinetochore function and chromosome segregation in mitosis. Required for kinetochore localization of dynein, LIS1, NDE1 and NDEL1. Regulates recycling of the plasma membrane by acting as a link between recycling vesicles and the microtubule network though its association with STX4 and SNAP25. Acts as a potential inhibitor of pocket protein-mediated cellular processes during development by regulating the activity of RB proteins during cell division and proliferation. May play a regulatory or permissive role in the normal embryonic cardiomyocyte cell cycle and in promoting continued mitosis in transformed, abnormally dividing neonatal cardiomyocytes. Interaction with RB directs embryonic stem cells toward a cardiac lineage. Involved in the regulation of DNA synthesis and hence cell cycle progression, via its C-terminus. Has a potential role regulating skeletal myogenesis and in cell differentiation in embryogenesis. Involved in dendritic cell regulation of T-cell immunity against chlamydia. The polypeptide is Centromere protein F (CENPF) (Homo sapiens (Human)).